A 135-amino-acid polypeptide reads, in one-letter code: Large ribosomal subunit protein uL16c (135 aa).

It belongs to the universal ribosomal protein uL16 family. Part of the 50S ribosomal subunit.

Its subcellular location is the plastid. The protein resides in the chloroplast. This is Large ribosomal subunit protein uL16c from Nandina domestica (Heavenly bamboo).